A 329-amino-acid polypeptide reads, in one-letter code: Prostaglandin reductase 1 (329 aa).

T18 is modified (phosphothreonine). S20 is subject to Phosphoserine. Residues 152–155 (GAVG), K178, Y193, N217, 239–245 (CGAISTY), 270–272 (FVV), and N321 contribute to the NADP(+) site. Position 178 is an N6-(2-hydroxyisobutyryl)lysine; alternate (K178). K178 carries the post-translational modification N6-acetyllysine; alternate.

It belongs to the NADP-dependent oxidoreductase L4BD family. In terms of assembly, monomer or homodimer. In terms of tissue distribution, high expression in the kidney, liver, and intestine but not in leukocytes.

It localises to the cytoplasm. It catalyses the reaction 13,14-dihydro-15-oxo-prostaglandin E1 + NADP(+) = 15-oxoprostaglandin E1 + NADPH + H(+). It carries out the reaction 13,14-dihydro-15-oxo-prostaglandin E2 + NADP(+) = 15-oxoprostaglandin E2 + NADPH + H(+). The enzyme catalyses 13,14-dihydro-15-oxo-prostaglandin F1alpha + NADP(+) = 15-oxoprostaglandin F1alpha + NADPH + H(+). The catalysed reaction is 13,14-dihydro-15-oxo-PGF2alpha + NADP(+) = 15-oxoprostaglandin F2alpha + NADPH + H(+). It catalyses the reaction leukotriene B4 + NADP(+) = 12-oxo-leukotriene B4 + NADPH + H(+). It carries out the reaction 20-hydroxy-leukotriene B4 + NADP(+) = 12-oxo-20-hydroxy-leukotriene B4 + NADPH + H(+). The enzyme catalyses 6-trans-leukotriene B4 + NADP(+) = 12-oxo-(5S)-hydroxy-(6E,8E,10E,14Z)-eicosatetraenoate + NADPH + H(+). The catalysed reaction is (5S,12S)-dihydroxy-(6E,10E,12E,14Z)-eicosatetraenoate + NADP(+) = 12-oxo-(5S)-hydroxy-(6E,8E,10E,14Z)-eicosatetraenoate + NADPH + H(+). It catalyses the reaction an n-alkanal + NADP(+) = an alk-2-enal + NADPH + H(+). It carries out the reaction hexanal + NADP(+) = (E)-hex-2-enal + NADPH + H(+). The enzyme catalyses octanal + NADP(+) = (2E)-octenal + NADPH + H(+). The catalysed reaction is decanal + NADP(+) = (2E)-decenal + NADPH + H(+). It catalyses the reaction dodecanal + NADP(+) = (2E)-dodecenal + NADPH + H(+). It carries out the reaction 4-hydroxynonanal + NADP(+) = (E)-4-hydroxynon-2-enal + NADPH + H(+). The enzyme catalyses pentan-2-one + NADP(+) = (E)-pent-3-en-2-one + NADPH + H(+). The catalysed reaction is nonan-2-one + NADP(+) = (3E)-nonen-2-one + NADPH + H(+). In terms of biological role, NAD(P)H-dependent oxidoreductase involved in metabolic inactivation of pro- and anti-inflammatory eicosanoids: prostaglandins (PG), leukotrienes (LT) and lipoxins (LX). Catalyzes with high efficiency the reduction of the 13,14 double bond of 15-oxoPGs, including 15-oxo-PGE1, 15-oxo-PGE2, 15-oxo-PGF1-alpha and 15-oxo-PGF2-alpha. Catalyzes with lower efficiency the oxidation of the hydroxyl group at C12 of LTB4 and its derivatives, converting them into biologically less active 12-oxo-LTB4 metabolites. Reduces 15-oxo-LXA4 to 13,14 dihydro-15-oxo-LXA4, enhancing neutrophil recruitment at the inflammatory site. May play a role in metabolic detoxification of alkenals and ketones. Reduces alpha,beta-unsaturated alkenals and ketones, particularly those with medium-chain length, showing highest affinity toward (2E)-decenal and (3E)-3-nonen-2-one. May inactivate 4-hydroxy-2-nonenal, a cytotoxic lipid constituent of oxidized low-density lipoprotein particles. This chain is Prostaglandin reductase 1 (PTGR1), found in Homo sapiens (Human).